The primary structure comprises 604 residues: MCGIMGAVSERDISKILLEGLRRLEYRGYDSAGIAVIDSQDRLKRVRIQGKVQNLADAMQETAIAGNTGIAHTRWATHGKPSEQNAHPHLSHGEIALVHNGIIENHEHLRQQLITYGYQFTSETDTEVAAHLIHYHYQQHENLLLAVQKAAAEMQGAFALGVIHQKRPEELVAIRKGSPLVLGFGIGENFIASDALALRSFAQSVIYMEEGDSACVTTQDIKVYDSNRILVQRAVHPLNSDSEIVNKGPYRHFMLKEIFEQSKVITDTLESRINSIDVLRASFGEKASHIFPVVKNIHIVACGTSYHAGMIAKYWLESLAGLPTQVEIASEYRYRDVVVPDNTLFITVSQSGETADTLAALFKAKQSNYLASLAICNVATSTLVREADCVFLTRAGIEIGVASTKAFTTQLAAFLMLAAALCKDNRAQEVLRQLQELPACCERVLQMNEEVESLASLFVNKVHALFLGRGVQYPVALEGALKLKEISYIHAEAYPAGELKHGPLALVDKDMPVIAVAPNDELLDKLKSNLHEVSARGGQLFVFVDDSQNWKANGARLIKVPSCGAWLAPIVYTIPLQLLAYHVAVAKGTDVDQPRNLAKSVTVE.

C2 acts as the Nucleophile; for GATase activity in catalysis. In terms of domain architecture, Glutamine amidotransferase type-2 spans 2–219 (CGIMGAVSER…EGDSACVTTQ (218 aa)). 2 SIS domains span residues 279-427 (LRAS…DNRA) and 454-594 (LASL…VDQP). Catalysis depends on K599, which acts as the For Fru-6P isomerization activity.

In terms of assembly, homodimer.

The protein localises to the cytoplasm. The enzyme catalyses D-fructose 6-phosphate + L-glutamine = D-glucosamine 6-phosphate + L-glutamate. In terms of biological role, catalyzes the first step in hexosamine metabolism, converting fructose-6P into glucosamine-6P using glutamine as a nitrogen source. The chain is Glutamine--fructose-6-phosphate aminotransferase [isomerizing] from Legionella pneumophila subsp. pneumophila (strain Philadelphia 1 / ATCC 33152 / DSM 7513).